The chain runs to 812 residues: Glycerol-3-phosphate acyltransferase (812 aa).

The short motif at C308 to M313 is the HXXXXD motif element.

It belongs to the GPAT/DAPAT family.

The protein resides in the cell inner membrane. It catalyses the reaction sn-glycerol 3-phosphate + an acyl-CoA = a 1-acyl-sn-glycero-3-phosphate + CoA. Its pathway is phospholipid metabolism; CDP-diacylglycerol biosynthesis; CDP-diacylglycerol from sn-glycerol 3-phosphate: step 1/3. The polypeptide is Glycerol-3-phosphate acyltransferase (Pseudoalteromonas translucida (strain TAC 125)).